The following is a 71-amino-acid chain: UPF0346 protein BcerKBAB4_2120 (71 aa).

This sequence belongs to the UPF0346 family.

The protein is UPF0346 protein BcerKBAB4_2120 of Bacillus mycoides (strain KBAB4) (Bacillus weihenstephanensis).